The sequence spans 82 residues: Sec-independent protein translocase protein TatA (82 aa).

Residues methionine 1–glycine 21 traverse the membrane as a helical segment. A compositionally biased stretch (basic and acidic residues) spans isoleucine 36–serine 47. Residues isoleucine 36–serine 82 are disordered.

It belongs to the TatA/E family. Forms a complex with TatC.

It localises to the cell membrane. Functionally, part of the twin-arginine translocation (Tat) system that transports large folded proteins containing a characteristic twin-arginine motif in their signal peptide across membranes. TatA could form the protein-conducting channel of the Tat system. The sequence is that of Sec-independent protein translocase protein TatA from Deinococcus deserti (strain DSM 17065 / CIP 109153 / LMG 22923 / VCD115).